Consider the following 240-residue polypeptide: MNFKKGEVLFFNKPLGWTSFKVVGHVRYHICRRIGVKKLKVGHAGTLDPLATGVMILCTGKATKRIEEFQYHTKEYVATLRLGATTPSYDLEHEIDATYPTGHITRELVEETLTHFLGAIEQVPPAFSACMVDGKRAYELARKGEEVELKAKQLVIDEIELLECRLDDPEPTIRIRVVCSKGTYIRALARDIGEALQSGAHLTELIRTRVGDVRLEDCLDPEHFKEWIDRQEIENDEDNN.

The Nucleophile role is filled by D48.

The protein belongs to the pseudouridine synthase TruB family. Type 1 subfamily.

The catalysed reaction is uridine(55) in tRNA = pseudouridine(55) in tRNA. Responsible for synthesis of pseudouridine from uracil-55 in the psi GC loop of transfer RNAs. The sequence is that of tRNA pseudouridine synthase B from Bacteroides thetaiotaomicron (strain ATCC 29148 / DSM 2079 / JCM 5827 / CCUG 10774 / NCTC 10582 / VPI-5482 / E50).